Here is a 646-residue protein sequence, read N- to C-terminus: MRAPGAGTASVASLALLWFLGLPWTWSAAAAFCVYVGGGGWRFLRIVCKTARRDLFGLSVLIRVRLELRRHRRAGDTIPCIFQAVARRQPERLALVDASSGICWTFAQLDTYSNAVANLFRQLGFAPGDVVAVFLEGRPEFVGLWLGLAKAGVVAALLNVNLRREPLAFCLGTSAAKALIYGGEMAAAVAEVSEQLGKSLLKFCSGDLGPESILPDTQLLDPMLAEAPTTPLAQAPGKGMDDRLFYIYTSGTTGLPKAAIVVHSRYYRIAAFGHHSYSMRAADVLYDCLPLYHSAGNIMGVGQCVIYGLTVVLRKKFSASRFWDDCVKYNCTVVQYIGEICRYLLRQPVRDVEQRHRVRLAVGNGLRPAIWEEFTQRFGVPQIGEFYGATECNCSIANMDGKVGSCGFNSRILTHVYPIRLVKVNEDTMEPLRDSEGLCIPCQPGEPGLLVGQINQQDPLRRFDGYVSDSATNKKIAHSVFRKGDSAYLSGDVLVMDELGYMYFRDRSGDTFRWRGENVSTTEVEAVLSRLLGQTDVAVYGVAVPGVEGKAGMAAIADPHSQLDPNSMYQELQKVLASYARPIFLRLLPQVDTTGTFKIQKTRLQREGFDPRQTSDRLFFLDLKQGRYVPLDERVHARICAGDFSL.

Residues 1–13 are Extracellular-facing; that stretch reads MRAPGAGTASVAS. A helical transmembrane segment spans residues 14-34; sequence LALLWFLGLPWTWSAAAAFCV. The Cytoplasmic portion of the chain corresponds to 35-646; it reads YVGGGGWRFL…ARICAGDFSL (612 aa). Residues 191 to 475 form a sufficient for oligomerization region; sequence EVSEQLGKSL…YVSDSATNKK (285 aa). 246–257 contacts AMP; it reads YIYTSGTTGLPK.

The protein belongs to the ATP-dependent AMP-binding enzyme family. As to quaternary structure, self-associates. May function as a homodimer. Interacts with EPRS1; mediates the translocation of SLC27A1 from the cytoplasm to the plasma membrane thereby increasing the uptake of long-chain fatty acids. Interacts with DGAT2 and this interaction is enhanced in the presence of ZFYVE1. Higher expression in white adipose tissue than in heart. Highest expression in skeletal muscle, heart and fat. Lower levels in brain, kidney, lung, liver and testis. No expression in spleen or intestine.

Its subcellular location is the cell membrane. The protein localises to the mitochondrion outer membrane. It is found in the endomembrane system. The protein resides in the cytoplasm. The enzyme catalyses a fatty acid(in) = a fatty acid(out). The catalysed reaction is (9Z)-octadecenoate(out) = (9Z)-octadecenoate(in). It carries out the reaction hexadecanoate(out) = hexadecanoate(in). It catalyses the reaction (5Z,8Z,11Z,14Z)-eicosatetraenoate(out) = (5Z,8Z,11Z,14Z)-eicosatetraenoate(in). The enzyme catalyses (9Z,12Z)-octadecadienoate(out) = (9Z,12Z)-octadecadienoate(in). The catalysed reaction is a long-chain fatty acid + ATP + CoA = a long-chain fatty acyl-CoA + AMP + diphosphate. It carries out the reaction (5Z,8Z,11Z,14Z)-eicosatetraenoate + ATP + CoA = (5Z,8Z,11Z,14Z)-eicosatetraenoyl-CoA + AMP + diphosphate. It catalyses the reaction a very long-chain fatty acid + ATP + CoA = a very long-chain fatty acyl-CoA + AMP + diphosphate. The enzyme catalyses tetracosanoate + ATP + CoA = tetracosanoyl-CoA + AMP + diphosphate. With respect to regulation, inhibited by Triacsin C. Both insulin and muscle contraction stimulate translocation to the plasma membrane in muscle, increasing fatty acid transport activity. In terms of biological role, mediates the import of long-chain fatty acids (LCFA) into the cell by facilitating their transport at the plasma membrane. Also functions as an acyl-CoA ligase catalyzing the ATP-dependent formation of fatty acyl-CoA using LCFA and very-long-chain fatty acids (VLCFA) as substrates, which prevents fatty acid efflux from cells and might drive more fatty acid uptake. May act directly as a bona fide transporter, or alternatively, in a cytoplasmic or membrane-associated multimeric protein complex to trap and draw fatty acids towards accumulation. Plays a pivotal role in regulating available LCFA substrates from exogenous sources in tissues undergoing high levels of beta-oxidation or triglyceride synthesis. May be involved in regulation of cholesterol metabolism. Probably involved in fatty acid transport across the blood barrier. The protein is Long-chain fatty acid transport protein 1 of Mus musculus (Mouse).